The sequence spans 286 residues: MITSKNEAAYLDLIRYVRDHGTEKGDRTGTGTRSHFGAQLRFDLKDGFPLLTTKKVHMKSITYELFWFLKGDTHVKYLQDHGVRIWNEWSTAEQTARFGRPEGELGPIYGHQWRNYGATKAEDGRYNQDGVDQVVEVIEQIKSNPNSRRLIVSGWNPAEATQVALPPCHTLFQFFVADGKLSCQLYQRSADLFLGVPFNIASYSLLTHMIAQVCDLEVGEFIWTGGDCHLYQNHIDQVNEQLSREAYELPKLWLNPEIKDIFDFTFDDIRVEGYQSHPAIKAPVAV.

A dUMP-binding site is contributed by R27. H57 contributes to the (6R)-5,10-methylene-5,6,7,8-tetrahydrofolate binding site. 148–149 contacts dUMP; the sequence is RR. C168 serves as the catalytic Nucleophile. DUMP contacts are provided by residues 188–191, N199, and 229–231; these read RSAD and HLY. D191 is a binding site for (6R)-5,10-methylene-5,6,7,8-tetrahydrofolate. A285 provides a ligand contact to (6R)-5,10-methylene-5,6,7,8-tetrahydrofolate.

It belongs to the thymidylate synthase family. Bacterial-type ThyA subfamily. As to quaternary structure, homodimer.

It is found in the cytoplasm. The catalysed reaction is dUMP + (6R)-5,10-methylene-5,6,7,8-tetrahydrofolate = 7,8-dihydrofolate + dTMP. Its pathway is pyrimidine metabolism; dTTP biosynthesis. Functionally, catalyzes the reductive methylation of 2'-deoxyuridine-5'-monophosphate (dUMP) to 2'-deoxythymidine-5'-monophosphate (dTMP) while utilizing 5,10-methylenetetrahydrofolate (mTHF) as the methyl donor and reductant in the reaction, yielding dihydrofolate (DHF) as a by-product. This enzymatic reaction provides an intracellular de novo source of dTMP, an essential precursor for DNA biosynthesis. The sequence is that of Thymidylate synthase from Psychrobacter sp. (strain PRwf-1).